The chain runs to 440 residues: MFLAQEIIRKKRDGQPLSEEEIRFFINGIRDNVVSEGQIAALAMTIYFHDMSMPERVALTMAMRDSGTVLNWKSLNLNGPLVDKHSTGGVGDVTSLMLGPMVAACGGYVPMISGRGLGHTGGTLDKLEAIPGFDIFPDDNAFRKIIQNVGVAIIGQTSSLAPADKRFYATRDITATVDSIPLITASILAKKLAEGLDALVMDVKVGSGAFMPTYSLSADLAQAIVGVANGAGCKTTALLTDMNQVLASSAGNGVEVREAVRFLTGEYRNPRLLEVTMALCVEMLLSGGLAHDEADARAKLQAVLDNGKAAEVFGRMVAAQKGPADFVERYDSYLPVATLSKPVFAEQTGIITAMDTRALGMAVVALGGGRRRATDPIDYSVGLTEMARLGTRVDGQQPLAVIHANNEDDWQQEAEVVRAAITLGNNTPEETPVIYRRITE.

It belongs to the thymidine/pyrimidine-nucleoside phosphorylase family. Homodimer.

It carries out the reaction thymidine + phosphate = 2-deoxy-alpha-D-ribose 1-phosphate + thymine. Its pathway is pyrimidine metabolism; dTMP biosynthesis via salvage pathway; dTMP from thymine: step 1/2. Functionally, the enzymes which catalyze the reversible phosphorolysis of pyrimidine nucleosides are involved in the degradation of these compounds and in their utilization as carbon and energy sources, or in the rescue of pyrimidine bases for nucleotide synthesis. The protein is Thymidine phosphorylase of Yersinia pestis.